A 173-amino-acid chain; its full sequence is ATP synthase subunit b (173 aa).

The helical transmembrane segment at 25-45 threads the bilayer; it reads LINLVIVIGVLYWFLKGFLGG.

It belongs to the ATPase B chain family. F-type ATPases have 2 components, F(1) - the catalytic core - and F(0) - the membrane proton channel. F(1) has five subunits: alpha(3), beta(3), gamma(1), delta(1), epsilon(1). F(0) has four main subunits: a(1), b(1), b'(1) and c(10-14). The alpha and beta chains form an alternating ring which encloses part of the gamma chain. F(1) is attached to F(0) by a central stalk formed by the gamma and epsilon chains, while a peripheral stalk is formed by the delta, b and b' chains.

The protein localises to the cellular thylakoid membrane. Functionally, f(1)F(0) ATP synthase produces ATP from ADP in the presence of a proton or sodium gradient. F-type ATPases consist of two structural domains, F(1) containing the extramembraneous catalytic core and F(0) containing the membrane proton channel, linked together by a central stalk and a peripheral stalk. During catalysis, ATP synthesis in the catalytic domain of F(1) is coupled via a rotary mechanism of the central stalk subunits to proton translocation. In terms of biological role, component of the F(0) channel, it forms part of the peripheral stalk, linking F(1) to F(0). In Synechococcus sp. (strain CC9311), this protein is ATP synthase subunit b.